The following is a 450-amino-acid chain: GTPase HflX (450 aa).

Disordered stretches follow at residues 79–110 and 173–196; these read TSMA…PDAA and RLRE…TLAL. Residues 178–189 show a composition bias toward gly residues; sequence SGGGGRQQGPGA. The region spanning 230 to 395 is the Hflx-type G domain; it reads LRVALVGYTN…TLIAFFEAEM (166 aa). GTP contacts are provided by residues 236–243, 261–265, 283–286, 349–352, and 373–375; these read GYTNAGKS, FATLD, DTVG, NKMD, and SAH. Mg(2+) is bound by residues S243 and T263.

The protein belongs to the TRAFAC class OBG-HflX-like GTPase superfamily. HflX GTPase family. In terms of assembly, monomer. Associates with the 50S ribosomal subunit. Requires Mg(2+) as cofactor.

It localises to the cytoplasm. Its function is as follows. GTPase that associates with the 50S ribosomal subunit and may have a role during protein synthesis or ribosome biogenesis. The chain is GTPase HflX from Gluconacetobacter diazotrophicus (strain ATCC 49037 / DSM 5601 / CCUG 37298 / CIP 103539 / LMG 7603 / PAl5).